A 293-amino-acid chain; its full sequence is Nucleotide-binding protein BCQ_4976 (293 aa).

Position 14–21 (14–21 (GMSGAGKT)) interacts with ATP. Position 65 to 68 (65 to 68 (DLRG)) interacts with GTP.

Belongs to the RapZ-like family.

Functionally, displays ATPase and GTPase activities. The polypeptide is Nucleotide-binding protein BCQ_4976 (Bacillus cereus (strain Q1)).